Consider the following 290-residue polypeptide: Phosphoribosylaminoimidazole-succinocarboxamide synthase (290 aa).

The protein belongs to the SAICAR synthetase family.

It catalyses the reaction 5-amino-1-(5-phospho-D-ribosyl)imidazole-4-carboxylate + L-aspartate + ATP = (2S)-2-[5-amino-1-(5-phospho-beta-D-ribosyl)imidazole-4-carboxamido]succinate + ADP + phosphate + 2 H(+). The protein operates within purine metabolism; IMP biosynthesis via de novo pathway; 5-amino-1-(5-phospho-D-ribosyl)imidazole-4-carboxamide from 5-amino-1-(5-phospho-D-ribosyl)imidazole-4-carboxylate: step 1/2. In Haemophilus influenzae (strain ATCC 51907 / DSM 11121 / KW20 / Rd), this protein is Phosphoribosylaminoimidazole-succinocarboxamide synthase (purC).